Reading from the N-terminus, the 344-residue chain is Cathepsin B-like cysteine proteinase 5 (344 aa).

An N-terminal signal peptide occupies residues M1–A15. A propeptide spanning residues V16 to A81 is cleaved from the precursor. 6 disulfide bridges follow: C95–C124, C107–C154, C143–C213, C144–C150, C183–C217, and C191–C203. Residue C110 is part of the active site. Residues H286 and N306 contribute to the active site.

It belongs to the peptidase C1 family.

The sequence is that of Cathepsin B-like cysteine proteinase 5 (cpr-5) from Caenorhabditis elegans.